Consider the following 426-residue polypeptide: Transcription termination factor Rho (426 aa).

Positions 58 to 131 (QSLARGYLDI…VRVEAVNGLD (74 aa)) constitute a Rho RNA-BD domain. ATP-binding positions include 176–181 (GRGQRA), 188–193 (KAGKTT), and R219.

Belongs to the Rho family. As to quaternary structure, homohexamer. The homohexamer assembles into an open ring structure.

Its function is as follows. Facilitates transcription termination by a mechanism that involves Rho binding to the nascent RNA, activation of Rho's RNA-dependent ATPase activity, and release of the mRNA from the DNA template. This Deinococcus radiodurans (strain ATCC 13939 / DSM 20539 / JCM 16871 / CCUG 27074 / LMG 4051 / NBRC 15346 / NCIMB 9279 / VKM B-1422 / R1) protein is Transcription termination factor Rho.